A 250-amino-acid chain; its full sequence is NAD(P)H-quinone oxidoreductase subunit K (250 aa).

The [4Fe-4S] cluster site is built by cysteine 60, cysteine 61, cysteine 125, and cysteine 156. The disordered stretch occupies residues 230–250 (ELNTPEIDVSPASQSSSTYES). Polar residues predominate over residues 240–250 (PASQSSSTYES).

Belongs to the complex I 20 kDa subunit family. NDH-1 can be composed of about 15 different subunits; different subcomplexes with different compositions have been identified which probably have different functions. [4Fe-4S] cluster serves as cofactor.

Its subcellular location is the cellular thylakoid membrane. It carries out the reaction a plastoquinone + NADH + (n+1) H(+)(in) = a plastoquinol + NAD(+) + n H(+)(out). It catalyses the reaction a plastoquinone + NADPH + (n+1) H(+)(in) = a plastoquinol + NADP(+) + n H(+)(out). NDH-1 shuttles electrons from an unknown electron donor, via FMN and iron-sulfur (Fe-S) centers, to quinones in the respiratory and/or the photosynthetic chain. The immediate electron acceptor for the enzyme in this species is believed to be plastoquinone. Couples the redox reaction to proton translocation, and thus conserves the redox energy in a proton gradient. Cyanobacterial NDH-1 also plays a role in inorganic carbon-concentration. The sequence is that of NAD(P)H-quinone oxidoreductase subunit K from Prochlorococcus marinus (strain MIT 9313).